The sequence spans 420 residues: Tryptophan synthase beta chain (420 aa).

At Lys100 the chain carries N6-(pyridoxal phosphate)lysine.

It belongs to the TrpB family. In terms of assembly, tetramer of two alpha and two beta chains. Pyridoxal 5'-phosphate serves as cofactor.

The enzyme catalyses (1S,2R)-1-C-(indol-3-yl)glycerol 3-phosphate + L-serine = D-glyceraldehyde 3-phosphate + L-tryptophan + H2O. The protein operates within amino-acid biosynthesis; L-tryptophan biosynthesis; L-tryptophan from chorismate: step 5/5. The beta subunit is responsible for the synthesis of L-tryptophan from indole and L-serine. This is Tryptophan synthase beta chain from Pyrobaculum islandicum (strain DSM 4184 / JCM 9189 / GEO3).